A 276-amino-acid chain; its full sequence is 3-methyl-2-oxobutanoate hydroxymethyltransferase (276 aa).

2 residues coordinate Mg(2+): D50 and D89. Residues 50–51, D89, and K119 contribute to the 3-methyl-2-oxobutanoate site; that span reads DS. E121 contributes to the Mg(2+) binding site. The active-site Proton acceptor is E188.

This sequence belongs to the PanB family. In terms of assembly, homodecamer; pentamer of dimers. The cofactor is Mg(2+).

It is found in the cytoplasm. It carries out the reaction 3-methyl-2-oxobutanoate + (6R)-5,10-methylene-5,6,7,8-tetrahydrofolate + H2O = 2-dehydropantoate + (6S)-5,6,7,8-tetrahydrofolate. It functions in the pathway cofactor biosynthesis; (R)-pantothenate biosynthesis; (R)-pantoate from 3-methyl-2-oxobutanoate: step 1/2. Catalyzes the reversible reaction in which hydroxymethyl group from 5,10-methylenetetrahydrofolate is transferred onto alpha-ketoisovalerate to form ketopantoate. This is 3-methyl-2-oxobutanoate hydroxymethyltransferase from Paracoccus denitrificans (strain Pd 1222).